The sequence spans 282 residues: Small ribosomal subunit protein uS3 (282 aa).

Positions 43 to 111 (IRQLMSTGME…QVQLNILEVK (69 aa)) constitute a KH type-2 domain. The segment at 218–282 (QQAASAPSRG…AAVATEGSDA (65 aa)) is disordered. A compositionally biased stretch (basic and acidic residues) spans 230-262 (PRRDGDDRGPRRENSGPRRDGGNLRSQRNDRNE). Residues 263–276 (NAAVEAAPAAAAVA) show a composition bias toward low complexity.

The protein belongs to the universal ribosomal protein uS3 family. As to quaternary structure, part of the 30S ribosomal subunit. Forms a tight complex with proteins S10 and S14.

In terms of biological role, binds the lower part of the 30S subunit head. Binds mRNA in the 70S ribosome, positioning it for translation. This is Small ribosomal subunit protein uS3 from Renibacterium salmoninarum (strain ATCC 33209 / DSM 20767 / JCM 11484 / NBRC 15589 / NCIMB 2235).